The following is a 177-amino-acid chain: Large ribosomal subunit protein uL22 (177 aa).

The segment at 118-177 is disordered; it reads VESRPSREGRRGGAGESAGGARARRAQGSKAAAAKKAPASSSKKAATTTEASEEAKGGSQ. The segment covering 121 to 130 has biased composition (basic and acidic residues); it reads RPSREGRRGG. Low complexity predominate over residues 145 to 167; the sequence is GSKAAAAKKAPASSSKKAATTTE.

It belongs to the universal ribosomal protein uL22 family. As to quaternary structure, part of the 50S ribosomal subunit.

Functionally, this protein binds specifically to 23S rRNA; its binding is stimulated by other ribosomal proteins, e.g. L4, L17, and L20. It is important during the early stages of 50S assembly. It makes multiple contacts with different domains of the 23S rRNA in the assembled 50S subunit and ribosome. In terms of biological role, the globular domain of the protein is located near the polypeptide exit tunnel on the outside of the subunit, while an extended beta-hairpin is found that lines the wall of the exit tunnel in the center of the 70S ribosome. This Mycobacterium sp. (strain KMS) protein is Large ribosomal subunit protein uL22.